Here is a 67-residue protein sequence, read N- to C-terminus: ATP synthase F(0) complex subunit 8 (67 aa).

A helical membrane pass occupies residues 8–24 (TWFITIISSMITLFILF). Lysine 54 carries the post-translational modification N6-acetyllysine; alternate. Lysine 54 is subject to N6-succinyllysine; alternate. Lysine 57 is modified (N6-acetyllysine).

This sequence belongs to the ATPase protein 8 family. As to quaternary structure, component of the ATP synthase complex composed at least of ATP5F1A/subunit alpha, ATP5F1B/subunit beta, ATP5MC1/subunit c (homooctomer), MT-ATP6/subunit a, MT-ATP8/subunit 8, ATP5ME/subunit e, ATP5MF/subunit f, ATP5MG/subunit g, ATP5MK/subunit k, ATP5MJ/subunit j, ATP5F1C/subunit gamma, ATP5F1D/subunit delta, ATP5F1E/subunit epsilon, ATP5PF/subunit F6, ATP5PB/subunit b, ATP5PD/subunit d, ATP5PO/subunit OSCP. ATP synthase complex consists of a soluble F(1) head domain (subunits alpha(3) and beta(3)) - the catalytic core - and a membrane F(0) domain - the membrane proton channel (subunits c, a, 8, e, f, g, k and j). These two domains are linked by a central stalk (subunits gamma, delta, and epsilon) rotating inside the F1 region and a stationary peripheral stalk (subunits F6, b, d, and OSCP). Interacts with PRICKLE3.

The protein localises to the mitochondrion membrane. Its function is as follows. Subunit 8, of the mitochondrial membrane ATP synthase complex (F(1)F(0) ATP synthase or Complex V) that produces ATP from ADP in the presence of a proton gradient across the membrane which is generated by electron transport complexes of the respiratory chain. ATP synthase complex consist of a soluble F(1) head domain - the catalytic core - and a membrane F(1) domain - the membrane proton channel. These two domains are linked by a central stalk rotating inside the F(1) region and a stationary peripheral stalk. During catalysis, ATP synthesis in the catalytic domain of F(1) is coupled via a rotary mechanism of the central stalk subunits to proton translocation. In vivo, can only synthesize ATP although its ATP hydrolase activity can be activated artificially in vitro. Part of the complex F(0) domain. The chain is ATP synthase F(0) complex subunit 8 from Mus musculus (Mouse).